The primary structure comprises 299 residues: Oxygen-dependent coproporphyrinogen-III oxidase (299 aa).

Ser92 contributes to the substrate binding site. 2 residues coordinate Mn(2+): His96 and His106. His106 (proton donor) is an active-site residue. Residue 108 to 110 coordinates substrate; sequence NVR. The Mn(2+) site is built by His145 and His175. The important for dimerization stretch occupies residues 240 to 275; the sequence is YVEFNLVWDRGTLFGLQTGGRTESILMSMPPLVRWE. Residue 258–260 coordinates substrate; the sequence is GGR.

Belongs to the aerobic coproporphyrinogen-III oxidase family. In terms of assembly, homodimer. Requires Mn(2+) as cofactor.

It localises to the cytoplasm. It carries out the reaction coproporphyrinogen III + O2 + 2 H(+) = protoporphyrinogen IX + 2 CO2 + 2 H2O. Its pathway is porphyrin-containing compound metabolism; protoporphyrin-IX biosynthesis; protoporphyrinogen-IX from coproporphyrinogen-III (O2 route): step 1/1. Functionally, involved in the heme biosynthesis. Catalyzes the aerobic oxidative decarboxylation of propionate groups of rings A and B of coproporphyrinogen-III to yield the vinyl groups in protoporphyrinogen-IX. In Escherichia coli (strain K12 / MC4100 / BW2952), this protein is Oxygen-dependent coproporphyrinogen-III oxidase.